The sequence spans 109 residues: Nucleoid-associated protein HI_0442 (109 aa).

The protein belongs to the YbaB/EbfC family. In terms of assembly, homodimer.

The protein resides in the cytoplasm. It localises to the nucleoid. In terms of biological role, binds to DNA and alters its conformation. May be involved in regulation of gene expression, nucleoid organization and DNA protection. In Haemophilus influenzae (strain ATCC 51907 / DSM 11121 / KW20 / Rd), this protein is Nucleoid-associated protein HI_0442.